The sequence spans 485 residues: Probable aspartic-type endopeptidase opsB (485 aa).

A signal peptide spans methionine 1–cysteine 20. Residues tyrosine 69–alanine 397 form the Peptidase A1 domain. N-linked (GlcNAc...) asparagine glycosylation occurs at asparagine 72. Residue aspartate 87 is part of the active site. 4 N-linked (GlcNAc...) asparagine glycosylation sites follow: asparagine 99, asparagine 107, asparagine 111, and asparagine 132. Aspartate 285 is a catalytic residue. 3 N-linked (GlcNAc...) asparagine glycosylation sites follow: asparagine 328, asparagine 337, and asparagine 402. The GPI-anchor amidated serine moiety is linked to residue serine 461. The propeptide at alanine 462–leucine 485 is removed in mature form.

It belongs to the peptidase A1 family.

The protein resides in the cell membrane. Its function is as follows. Probable GPI-anchored aspartic-type endopeptidase which contributes to virulence. In Aspergillus fumigatus (strain ATCC MYA-4609 / CBS 101355 / FGSC A1100 / Af293) (Neosartorya fumigata), this protein is Probable aspartic-type endopeptidase opsB (opsB).